A 122-amino-acid polypeptide reads, in one-letter code: Large ribosomal subunit protein uL14 (122 aa).

Belongs to the universal ribosomal protein uL14 family. Part of the 50S ribosomal subunit. Forms a cluster with proteins L3 and L19. In the 70S ribosome, L14 and L19 interact and together make contacts with the 16S rRNA in bridges B5 and B8.

In terms of biological role, binds to 23S rRNA. Forms part of two intersubunit bridges in the 70S ribosome. The protein is Large ribosomal subunit protein uL14 of Rickettsia rickettsii (strain Iowa).